A 194-amino-acid chain; its full sequence is Cysteine and glycine-rich protein 3 (194 aa).

Positions 1–5 are interaction with TCAP; sequence MPNWG. The LIM zinc-binding 1 domain maps to 10 to 61; sequence CGACDKTVYHAEEIQCNGRSFHKTCFHCMACRKALDSTTVAAHESEIYCKVC. Residues 64 to 69 carry the Nuclear localization signal motif; the sequence is RKYGPK. Residues 94-105 form an interaction with CLF2 region; sequence QSPKPARAATTS. A phosphoserine mark is found at Ser-95, Ser-111, and Ser-153. Residues 120–171 enclose the LIM zinc-binding 2 domain; the sequence is CPRCGKSVYAAEKVMGGGKPWHKTCFPCAICGKSLESTNVTDKDGELYCKVC.

As to quaternary structure, self-associates. Oligomeric in the cytoplasm and monomeric in the nucleus. Homooligomers preferentially form along the actin cytoskeleton. Interacts with TCAP, ACTN2 and NRAP. Interacts with LDHD, SPTB, MYOD1, MYOG, MYF6. Interacts with GLRX3 (via C-terminus); GLRX3 and calcineurin compete for interaction with CSRP3. Interacts with CFL2; the stoichiometry influences F-actin depolymerization and possibly two molecules of CFL2 can interact with one molecule of CSRP3 resulting in the highest functional impact; the interaction is stronger with phosphorylated CFL2. Post-translationally, phosphorylated by PKC/PRKCA. As to expression, high in striated muscle and adult heart.

Its subcellular location is the nucleus. The protein resides in the cytoplasm. It is found in the cytoskeleton. It localises to the myofibril. The protein localises to the sarcomere. Its subcellular location is the z line. Functionally, positive regulator of myogenesis. Acts as a cofactor for myogenic bHLH transcription factors such as MYOD1, and probably MYOG and MYF6. Enhances the DNA-binding activity of the MYOD1:TCF3 isoform E47 complex and may promote formation of a functional MYOD1:TCF3 isoform E47:MEF2A complex involved in myogenesis. Plays a crucial and specific role in the organization of cytosolic structures in cardiomyocytes. Could play a role in mechanical stretch sensing. May be a scaffold protein that promotes the assembly of interacting proteins at Z-line structures. It is essential for calcineurin anchorage to the Z line. Required for stress-induced calcineurin-NFAT activation. The role in regulation of cytoskeleton dynamics by association with CFL2 is reported conflictingly. Proposed to contribute to the maintenance of muscle cell integrity through an actin-based mechanism. Can directly bind to actin filaments, cross-link actin filaments into bundles without polarity selectivity and protect them from dilution- and cofilin-mediated depolymerization; the function seems to involve its self-association. In vitro can inhibit PKC/PRKCA activity. Proposed to be involved in cardiac stress signaling by down-regulating excessive PKC/PRKCA signaling. This chain is Cysteine and glycine-rich protein 3 (Csrp3), found in Rattus norvegicus (Rat).